Here is a 262-residue protein sequence, read N- to C-terminus: Protein BREAKING OF ASYMMETRY IN THE STOMATAL LINEAGE (262 aa).

2 disordered regions span residues 32–107 (DEDG…QPPV) and 129–222 (KEGK…GRGS). Residues 37 to 47 (NNNGNTTNNNN) show a composition bias toward low complexity. 2 consecutive short sequence motifs (nuclear localization signal) follow at residues 50-57 (FKRIKRKI) and 61-68 (KKKRSERK). Positions 51 to 66 (KRIKRKIKSTKKKRSE) are enriched in basic residues. Phosphoserine; by ASK7 occurs at positions 72, 85, 86, and 87. A compositionally biased stretch (low complexity) spans 84 to 95 (RSSSVSPTTSGS). A Phosphoserine; by ASK7 and MPK6 modification is found at Ser-89. Thr-91 carries the post-translational modification Phosphothreonine; by ASK7. Basic and acidic residues predominate over residues 129 to 146 (KEGKQEKKETESSSEKSP). Residues Ser-145 and Ser-168 each carry the phosphoserine; by MPK6 modification. Residues 179–189 (NDNTSCQGTKD) are compositionally biased toward polar residues. Positions 190–200 (VSSDVTERTKE) are enriched in basic and acidic residues. A required for polarization at the cell cortex region spans residues 222–262 (SFAFPILGVEWMGSPAKMPESDDLSPKKQKPVALGFQCCRF). Positions 223–226 (FAFP) match the FxFP, required for cortical polarity formation motif. Residues Ser-235 and Ser-246 each carry the phosphoserine; by MPK6 modification.

Component of a complex made of POLAR, BASL, ASK7/BIN2 and ASK3/SK12. Interacts with POLAR, ASK7/BIN2 and ASK3/SK12. Binds to YDA when phosphorylated. Interacts with MPK6, MPK3 and MKK5. Post-translationally, cortical localization of BASL requires phosphorylation mediated by MPK3 and MPK6. Phosphorylation promotes YDA binding. Phosphorylation status modulates subcellular mobility. As to expression, mostly expressed in stomatal lineage cells including asymmetrically dividing meristemoid mother cells (MMCs) and meristemoids, and, at lower levels, in their sisters. Also present in vasculature. Expressed at low levels in the epidermal pavement cells.

It localises to the cytoplasm. The protein localises to the nucleus. It is found in the cell cortex. The protein resides in the cell membrane. Functionally, regulates asymmetric cell division (ACD), especially in stomatal-lineage cells, probably by modulating accumulation and subcellular polarization of POLAR and SPCH. Mediates an attenuation of MAPK signaling upon polarization of POLAR and ASK7/BIN2 in stomatal lineage ground cells (SLGCs) undergoing ACD, and relieves BIN2 inhibition of SPCH in the nucleus. When phosphorylated, functions as a scaffold and recruits the MAPKKK YODA, MPK3 and MPK6 to spatially reorganize the MAPK signaling pathway at the cortex of cells undergoing ACD. Cortical polarization leads to elevated nuclear MPK6 signaling and lowered SPCH abundance in one of the two daughter cells, thus differentiating the two daughter cells after ACD. This chain is Protein BREAKING OF ASYMMETRY IN THE STOMATAL LINEAGE, found in Arabidopsis thaliana (Mouse-ear cress).